Consider the following 46-residue polypeptide: Protein PsbN (46 aa).

The chain crosses the membrane as a helical span at residues 10-30 (LAIIVLVVLLGLTGLGVYMAF).

Belongs to the PsbN family.

It is found in the cellular thylakoid membrane. In terms of biological role, may play a role in photosystem I and II biogenesis. This chain is Protein PsbN, found in Prochlorococcus marinus (strain MIT 9211).